We begin with the raw amino-acid sequence, 328 residues long: P2Y purinoceptor 3 (328 aa).

Residues 1-22 are Extracellular-facing; it reads MSMANFTAGRNSCTFQEEFKQV. Asn-5 carries N-linked (GlcNAc...) asparagine glycosylation. Residues 23–43 traverse the membrane as a helical segment; the sequence is LLPLVYSVVFLLGLPLNAVVI. The Cytoplasmic portion of the chain corresponds to 44–57; it reads GQIWLARKALTRTT. The helical transmembrane segment at 58 to 78 threads the bilayer; it reads IYMLNLATADLLYVCSLPLLI. The Extracellular segment spans residues 79–96; the sequence is YNYTQKDYWPFGDFTCKF. Cys-94 and Cys-172 are disulfide-bonded. Residues 97-117 traverse the membrane as a helical segment; it reads VRFQFYTNLHGSILFLTCISV. Topologically, residues 118-139 are cytoplasmic; that stretch reads QRYMGICHPLASWHKKKGKKLT. A helical transmembrane segment spans residues 140–160; the sequence is WLVCAAVWFIVIAQCLPTFVF. Over 161–189 the chain is Extracellular; that stretch reads ASTGTQRNRTVCYDLSPPDRSASYFPYGI. Residues 190–210 form a helical membrane-spanning segment; the sequence is TLTITGFLLPFAAILACYCSM. Over 211–231 the chain is Cytoplasmic; it reads ARILCQKDELIGLAVHKKKDK. A helical transmembrane segment spans residues 232-252; the sequence is AVRMIIIVVIVFSISFFPFHL. Residues 253 to 275 are Extracellular-facing; sequence TKTIYLIVRSSPTLPCPTLQAFA. A helical membrane pass occupies residues 276–298; that stretch reads IAYKCTRPFASMNSVLDPILFYF. Over 299 to 323 the chain is Cytoplasmic; sequence TQRKFRESTRYLLDKMSSKWRHDHC.

Belongs to the G-protein coupled receptor 1 family.

The protein resides in the cell membrane. Functionally, receptor for extracellular UDP &gt; ADP = UTP. The activity of this receptor is mediated by G proteins which activate a phosphatidylinositol-calcium second messenger system. The sequence is that of P2Y purinoceptor 3 (P2RY3) from Meleagris gallopavo (Wild turkey).